Here is a 194-residue protein sequence, read N- to C-terminus: MTGPFDDDGPEEDAPVPAPPDHLAGLRGIDLVRRTLEEARGAARSQGKDVGRGRSGPARRVGGNRRRRTWSGPGPDARDPQLLGAVTQDLAKSRGWSARVAEGSVIGRWRAVVGDQIADHATPTALNEGVLTVTAESTAWATQLRMVQSQLLAKIAAVVGDGVVTTLKIVGPAGPSWRKGRYHVSGRGPRDTYG.

Acidic residues predominate over residues 1-14; sequence MTGPFDDDGPEEDA. The interval 1-81 is disordered; the sequence is MTGPFDDDGP…GPGPDARDPQ (81 aa). A compositionally biased stretch (basic and acidic residues) spans 30-52; it reads DLVRRTLEEARGAARSQGKDVGR.

Belongs to the UPF0232 family.

The protein is UPF0232 protein MSMEG_0004/MSMEI_0006 of Mycolicibacterium smegmatis (strain ATCC 700084 / mc(2)155) (Mycobacterium smegmatis).